We begin with the raw amino-acid sequence, 51 residues long: Kunitz-like toxin PcKuz3 (51 aa).

3 disulfides stabilise this stretch: Cys1-Cys51, Cys10-Cys34, and Cys26-Cys47.

It belongs to the venom Kunitz-type family. Sea anemone type 2 potassium channel toxin subfamily.

The protein resides in the secreted. Its subcellular location is the nematocyst. Potent toxin and weak serine protease inhibitor that displays activity on both trypsin and elastase. May act as a neurotoxin by blocking voltage-gated potassium channels (Kv1.1/KCNA1 and Kv1.2/KCNA2). Has a neuroprotective effect, since it suppress, at low concentration, the 6-hydroxydopamine-induced neurotoxicity on the locomotive behavior of zebrafish. In vivo, has strong reversible antilocomotor activity. In addition, it is lethal to zebrafish larvae at high doses. This is Kunitz-like toxin PcKuz3 from Palythoa caribaeorum (White encrusting zoanthid coral).